A 397-amino-acid polypeptide reads, in one-letter code: MVHLTSALLVAGAAFAAAAPMNHIFERQDTCSVSDNYPTVNSAKLPDPFTTASGEKVTTKDQFECRRAEINKILQQYELGEYPGPPDSVEASLSGNSITVRVTVGSKSISFSASIRKPSGAGPFPAIIGIGGASIPIPSNVATITFNNDEFGAQMGSGSRGQGKFYDLFGRDHSAGSLTAWAWGVDRLIDGLEQVGAQASGIDTKRLGVTGCSRNGKGAFITGALVDRIALTIPQESGAGGAACWRISDQQKAAGANIQTAAQIITENPWFSRNFDPHVNSITSVPQDHHLLAALIVPRGLAVFENNIDWLGPVSTTGCMAAGRLIYKAYGVPNNMGFSLVGGHNHCQFPSSQNQDLNSYINYFLLGQGSPSGVEHSDVNVNVAEWAPWGAGAPTLA.

Residues 1–18 (MVHLTSALLVAGAAFAAA) form the signal peptide. Cystine bridges form between cysteine 31–cysteine 65, cysteine 212–cysteine 347, and cysteine 244–cysteine 319. Positions 211 to 216 (GCSRNG) match the GXSYXG catalytic site motif motif. The active-site Nucleophile is the serine 213. Substrate-binding residues include lysine 217, glutamine 259, glutamate 267, and tryptophan 310. The active-site Proton donor/acceptor is histidine 346.

The protein belongs to the carbohydrate esterase 15 (CE15) family.

The protein localises to the secreted. The catalysed reaction is a 4-O-methyl-alpha-D-glucuronosyl ester derivative + H2O = 4-O-methyl-alpha-D-glucuronate derivative + an alcohol + H(+). In terms of biological role, glucuronoyl esterase which may play a significant role in biomass degradation, as it is considered to disconnect hemicellulose from lignin through the hydrolysis of the ester bond between 4-O-methyl-D-glucuronic acid residues of glucuronoxylans and aromatic alcohols of lignin. The protein is 4-O-methyl-glucuronoyl methylesterase (ge2) of Thermothelomyces thermophilus (strain ATCC 42464 / BCRC 31852 / DSM 1799) (Sporotrichum thermophile).